Consider the following 153-residue polypeptide: UPF0158 protein PA5073 (153 aa).

It belongs to the UPF0158 family.

This is UPF0158 protein PA5073 from Pseudomonas aeruginosa (strain ATCC 15692 / DSM 22644 / CIP 104116 / JCM 14847 / LMG 12228 / 1C / PRS 101 / PAO1).